The sequence spans 291 residues: MGRILNRTVLMTLLVVTMAGTAFSGSFNEEFDLTWGEHRGKIFSGGKMLSLSLDRVSGSGFKSKKEYLFGRIDMQLKLVAGNSAGTVTAYYLSSEGPTHDEIDFEFLGNETGKPYVLHTNVFAQGKGNREQQFYLWFDPTKNFHTYSLVWRPQHIIFMVDNVPIRVFNNAEQLGVPFPKNQPMKIYSSLWNADDWATRGGLVKTDWSKAPFTAYYRGFNAAACTVSSGSSFCDPKFKSSFTNGESQVANELNAYGRRRLRWVQKYFMIYDYCSDLKRFPQGFPPECRKSRV.

A signal peptide spans 1–24; sequence MGRILNRTVLMTLLVVTMAGTAFS. A GH16 domain is found at 25–215; that stretch reads GSFNEEFDLT…WSKAPFTAYY (191 aa). Glu101 serves as the catalytic Nucleophile. The Proton donor role is filled by Glu105. Residue Glu105 coordinates xyloglucan. Asn109 is a glycosylation site (N-linked (GlcNAc...) asparagine). Xyloglucan is bound by residues 118 to 120, 128 to 130, 194 to 195, and Gly199; these read HTN, NRE, and DW. Intrachain disulfides connect Cys223/Cys232 and Cys272/Cys286. Arg277 contributes to the xyloglucan binding site.

It belongs to the glycosyl hydrolase 16 family. XTH group 2 subfamily. Post-translationally, contains at least one intrachain disulfide bond essential for its enzymatic activity.

It localises to the secreted. The protein resides in the cell wall. It is found in the extracellular space. Its subcellular location is the apoplast. It catalyses the reaction breaks a beta-(1-&gt;4) bond in the backbone of a xyloglucan and transfers the xyloglucanyl segment on to O-4 of the non-reducing terminal glucose residue of an acceptor, which can be a xyloglucan or an oligosaccharide of xyloglucan.. Its function is as follows. Catalyzes xyloglucan endohydrolysis (XEH) and/or endotransglycosylation (XET). Cleaves and religates xyloglucan polymers, an essential constituent of the primary cell wall, and thereby participates in cell wall construction of growing tissues. The protein is Probable xyloglucan endotransglucosylase/hydrolase protein 16 (XTH16) of Arabidopsis thaliana (Mouse-ear cress).